The primary structure comprises 202 residues: CASP-like protein 2B1 (202 aa).

Topologically, residues 1–29 are cytoplasmic; the sequence is MSYLGVGVSPGNVPVYHGTNLKVVDRRVR. Residues 30–50 form a helical membrane-spanning segment; that stretch reads LAELVLRCVICGLGILAAVLV. Residues 51-72 are Extracellular-facing; sequence GTDTQVKVIFTIQKKAKFTDMK. A helical transmembrane segment spans residues 73-93; it reads ALVFLVIANGIAAAYSLIQGL. Over 94–109 the chain is Cytoplasmic; sequence RCVVSMVRGSVLFSKP. A helical membrane pass occupies residues 110–130; the sequence is LAWAIFSGDQVIAYLTLAAVA. The Extracellular portion of the chain corresponds to 131–164; sequence AAAQSSVFGEFGQPELQWMKICNMYGKFCNQVGE. The helical transmembrane segment at 165–185 threads the bilayer; the sequence is GIVSAVGVSLSMVILSGISAF. The Cytoplasmic portion of the chain corresponds to 186–202; sequence SLFRLYGGNKGTSGGRW.

Belongs to the Casparian strip membrane proteins (CASP) family. As to quaternary structure, homodimer and heterodimers.

The protein resides in the cell membrane. The chain is CASP-like protein 2B1 from Vitis vinifera (Grape).